The following is a 176-amino-acid chain: Large ribosomal subunit protein uL6 (176 aa).

It belongs to the universal ribosomal protein uL6 family. In terms of assembly, part of the 50S ribosomal subunit.

In terms of biological role, this protein binds to the 23S rRNA, and is important in its secondary structure. It is located near the subunit interface in the base of the L7/L12 stalk, and near the tRNA binding site of the peptidyltransferase center. The chain is Large ribosomal subunit protein uL6 from Burkholderia ambifaria (strain ATCC BAA-244 / DSM 16087 / CCUG 44356 / LMG 19182 / AMMD) (Burkholderia cepacia (strain AMMD)).